Consider the following 338-residue polypeptide: MEERILTQNFTQEDASEYSLRPRWLSEYIGQQKIKEELKIYIEAAKMRKEPLDHVLLYGPPGLGKTTLATVISNEMGVGIKITSGPAIEKSGDLAAILTNLQENDILFIDEIHRLNRSVEEILYPAMEDFELDIVIGKGPSARSIRLSLPRFTLIGATTRAALMTSPLRDRFGVINRLDYYSVEELKEIIKRSANILNIGIDEKAALEIAKRSRGTPRIANRLLKRVRDFAQVRGNGYIDFKTSKEALDVLGVDEIGLEYIDRKILVSIIEKFGGGPVGIDAIAASIGEDGDTIEDVYEPYLLQIGFLNRTPRGRVVTKLAYDYLKYPYIEQGRIEGV.

Residues 1–181 (MEERILTQNF…FGVINRLDYY (181 aa)) are large ATPase domain (RuvB-L). ATP contacts are provided by residues leucine 20, arginine 21, glycine 62, lysine 65, threonine 66, threonine 67, 128–130 (EDF), arginine 171, tyrosine 181, and arginine 218. A Mg(2+)-binding site is contributed by threonine 66. The interval 182–252 (SVEELKEIIK…TSKEALDVLG (71 aa)) is small ATPAse domain (RuvB-S). The tract at residues 255–338 (EIGLEYIDRK…YIEQGRIEGV (84 aa)) is head domain (RuvB-H). Residues arginine 310 and arginine 315 each contribute to the DNA site.

This sequence belongs to the RuvB family. In terms of assembly, homohexamer. Forms an RuvA(8)-RuvB(12)-Holliday junction (HJ) complex. HJ DNA is sandwiched between 2 RuvA tetramers; dsDNA enters through RuvA and exits via RuvB. An RuvB hexamer assembles on each DNA strand where it exits the tetramer. Each RuvB hexamer is contacted by two RuvA subunits (via domain III) on 2 adjacent RuvB subunits; this complex drives branch migration. In the full resolvosome a probable DNA-RuvA(4)-RuvB(12)-RuvC(2) complex forms which resolves the HJ.

Its subcellular location is the cytoplasm. It catalyses the reaction ATP + H2O = ADP + phosphate + H(+). In terms of biological role, the RuvA-RuvB-RuvC complex processes Holliday junction (HJ) DNA during genetic recombination and DNA repair, while the RuvA-RuvB complex plays an important role in the rescue of blocked DNA replication forks via replication fork reversal (RFR). RuvA specifically binds to HJ cruciform DNA, conferring on it an open structure. The RuvB hexamer acts as an ATP-dependent pump, pulling dsDNA into and through the RuvAB complex. RuvB forms 2 homohexamers on either side of HJ DNA bound by 1 or 2 RuvA tetramers; 4 subunits per hexamer contact DNA at a time. Coordinated motions by a converter formed by DNA-disengaged RuvB subunits stimulates ATP hydrolysis and nucleotide exchange. Immobilization of the converter enables RuvB to convert the ATP-contained energy into a lever motion, pulling 2 nucleotides of DNA out of the RuvA tetramer per ATP hydrolyzed, thus driving DNA branch migration. The RuvB motors rotate together with the DNA substrate, which together with the progressing nucleotide cycle form the mechanistic basis for DNA recombination by continuous HJ branch migration. Branch migration allows RuvC to scan DNA until it finds its consensus sequence, where it cleaves and resolves cruciform DNA. This Thermoanaerobacter pseudethanolicus (strain ATCC 33223 / 39E) (Clostridium thermohydrosulfuricum) protein is Holliday junction branch migration complex subunit RuvB.